A 180-amino-acid polypeptide reads, in one-letter code: MVPRLKEKYQTEVVPALMQEFRYRSVMQVPRIEKIVLNIGLGEAIQNSKALDAATADLAAIAGQKPVITRARKSIAAFKVRQGMPIGVMVTLRGPRMWSFLDRLMNLVLPRLRDFRGVSRRSFDGRGNYSIGLREQIVFPEIDYDKVDKLRGLEVVIVTTAPDDEQGYALLKRLGMPFRD.

Belongs to the universal ribosomal protein uL5 family. As to quaternary structure, part of the 50S ribosomal subunit; part of the 5S rRNA/L5/L18/L25 subcomplex. Contacts the 5S rRNA and the P site tRNA. Forms a bridge to the 30S subunit in the 70S ribosome.

This is one of the proteins that bind and probably mediate the attachment of the 5S RNA into the large ribosomal subunit, where it forms part of the central protuberance. In the 70S ribosome it contacts protein S13 of the 30S subunit (bridge B1b), connecting the 2 subunits; this bridge is implicated in subunit movement. Contacts the P site tRNA; the 5S rRNA and some of its associated proteins might help stabilize positioning of ribosome-bound tRNAs. The chain is Large ribosomal subunit protein uL5 from Roseiflexus sp. (strain RS-1).